Reading from the N-terminus, the 173-residue chain is Ferritin-1 heavy chain (173 aa).

One can recognise a Ferritin-like diiron domain in the interval 6–155 (QNYHEECEAG…DYITNLIRVG (150 aa)). 5 residues coordinate Fe cation: glutamate 23, glutamate 58, histidine 61, glutamate 103, and glutamine 137.

Belongs to the ferritin family. In terms of assembly, oligomer of 24 subunits. The functional molecule forms a roughly spherical shell with a diameter of 12 nm and contains a central cavity into which the insoluble mineral iron core is deposited.

It carries out the reaction 4 Fe(2+) + O2 + 4 H(+) = 4 Fe(3+) + 2 H2O. In terms of biological role, stores iron in a soluble, non-toxic, readily available form. Important for iron homeostasis. Has ferroxidase activity. Iron is taken up in the ferrous form and deposited as ferric hydroxides after oxidation. In Schistosoma mansoni (Blood fluke), this protein is Ferritin-1 heavy chain (SCM-1).